Consider the following 198-residue polypeptide: Phage-like element PBSX protein XkdA (198 aa).

The protein to B.subtilis YqaB.

In Bacillus subtilis (strain 168), this protein is Phage-like element PBSX protein XkdA (xkdA).